Consider the following 187-residue polypeptide: Large ribosomal subunit protein uL6 (187 aa).

The segment at 151–170 (EAARIRSLRPPEPYKGKGIK) is disordered.

This sequence belongs to the universal ribosomal protein uL6 family. In terms of assembly, part of the 50S ribosomal subunit.

This protein binds to the 23S rRNA, and is important in its secondary structure. It is located near the subunit interface in the base of the L7/L12 stalk, and near the tRNA binding site of the peptidyltransferase center. In Chloroflexus aurantiacus (strain ATCC 29366 / DSM 635 / J-10-fl), this protein is Large ribosomal subunit protein uL6.